The primary structure comprises 405 residues: Probable tRNA sulfurtransferase (405 aa).

One can recognise a THUMP domain in the interval 60–165 (AEVDKRLKKV…QDAVYISNQL (106 aa)). Residues 183 to 184 (ML), 208 to 209 (HF), R265, G287, and Q296 each bind ATP.

This sequence belongs to the ThiI family.

The protein localises to the cytoplasm. The catalysed reaction is [ThiI sulfur-carrier protein]-S-sulfanyl-L-cysteine + a uridine in tRNA + 2 reduced [2Fe-2S]-[ferredoxin] + ATP + H(+) = [ThiI sulfur-carrier protein]-L-cysteine + a 4-thiouridine in tRNA + 2 oxidized [2Fe-2S]-[ferredoxin] + AMP + diphosphate. The enzyme catalyses [ThiS sulfur-carrier protein]-C-terminal Gly-Gly-AMP + S-sulfanyl-L-cysteinyl-[cysteine desulfurase] + AH2 = [ThiS sulfur-carrier protein]-C-terminal-Gly-aminoethanethioate + L-cysteinyl-[cysteine desulfurase] + A + AMP + 2 H(+). It functions in the pathway cofactor biosynthesis; thiamine diphosphate biosynthesis. Its function is as follows. Catalyzes the ATP-dependent transfer of a sulfur to tRNA to produce 4-thiouridine in position 8 of tRNAs, which functions as a near-UV photosensor. Also catalyzes the transfer of sulfur to the sulfur carrier protein ThiS, forming ThiS-thiocarboxylate. This is a step in the synthesis of thiazole, in the thiamine biosynthesis pathway. The sulfur is donated as persulfide by IscS. In Lactobacillus helveticus (strain DPC 4571), this protein is Probable tRNA sulfurtransferase.